Reading from the N-terminus, the 491-residue chain is D-xylose-proton symporter (491 aa).

The Cytoplasmic portion of the chain corresponds to 1–9 (MNTQYNSSY). The chain crosses the membrane as a helical span at residues 10 to 30 (IFSITLVATLGGLLFGYDTAV). At 31 to 55 (ISGTVESLNTVFVAPQNLSESAANS) the chain is on the periplasmic side. Residues 56-76 (LLGFCVASALIGCIIGGALGG) form a helical membrane-spanning segment. The Cytoplasmic portion of the chain corresponds to 77–89 (YCSNRFGRRDSLK). The chain crosses the membrane as a helical span at residues 90-110 (IAAVLFFISGVGSAWPELGFT). Residues 111-133 (SINPDNTVPVYLAGYVPEFVIYR) lie on the Periplasmic side of the membrane. The helical transmembrane segment at 134 to 154 (IIGGIGVGLASMLSPMYIAEL) threads the bilayer. Residues 155–165 (APAHIRGKLVS) lie on the Cytoplasmic side of the membrane. A helical membrane pass occupies residues 166-186 (FNQFAIIFGQLLVYCVNYFIA). Residue Q168 coordinates beta-D-xylose. The Periplasmic segment spans residues 187 to 200 (RSGDASWLNTDGWR). The helical transmembrane segment at 201-221 (YMFASECIPALLFLMLLYTVP) threads the bilayer. At 222–272 (ESPRWLMSRGKQEQAEGILRKIMGNTLATQAVQEIKHSLDHGRKTGGRLLM) the chain is on the cytoplasmic side. A helical transmembrane segment spans residues 273-293 (FGVGVIVIGVMLSIFQQFVGI). Residues 288–289 (QQ) and N294 contribute to the beta-D-xylose site. Residues 294–312 (NVVLYYAPEVFKTLGASTD) are Periplasmic-facing. The helical transmembrane segment at 313–333 (IALLQTIIVGVINLTFTVLAI) threads the bilayer. The Cytoplasmic portion of the chain corresponds to 334–343 (MTVDKFGRKP). The chain crosses the membrane as a helical span at residues 344–364 (LQIIGALGMAIGMFSLGTAFY). Residues 365–369 (TQAPG) lie on the Periplasmic side of the membrane. Residues 370 to 390 (IVALLSMLFYVAAFAMSWGPV) traverse the membrane as a helical segment. Over 391 to 407 (CWVLLSEIFPNAIRGKA) the chain is Cytoplasmic. The beta-D-xylose site is built by W392 and Q415. A helical transmembrane segment spans residues 408–428 (LAIAVAAQWLANYFVSWTFPM). Residues 429-442 (MDKNSWLVAHFHNG) are Periplasmic-facing. The helical transmembrane segment at 443–463 (FSYWIYGCMGVLAALFMWKFV) threads the bilayer. The Cytoplasmic portion of the chain corresponds to 464–491 (PETKGKTLEELEALWEPETKKTQQTATL).

The protein belongs to the major facilitator superfamily. Sugar transporter (TC 2.A.1.1) family.

It is found in the cell inner membrane. The catalysed reaction is D-xylose(in) + H(+)(in) = D-xylose(out) + H(+)(out). In terms of biological role, uptake of D-xylose across the boundary membrane with the concomitant transport of protons into the cell (symport system). This is D-xylose-proton symporter (xylE) from Escherichia coli O157:H7.